Reading from the N-terminus, the 733-residue chain is Protein OBERON 3 (733 aa).

Residues 1–15 are compositionally biased toward basic and acidic residues; the sequence is MIGEKDLAGDGECSR. Disordered stretches follow at residues 1–42 and 118–142; these read MIGE…YHQK and NPNS…KKSN. The segment covering 21 to 30 has biased composition (polar residues); it reads PRFSNLNNQT. A coiled-coil region spans residues 120–153; that stretch reads NSSKRKAHEEEEEAEEEEDKKSNKIETLNLSLAL. The segment at 436-500 adopts a PHD-type zinc-finger fold; sequence SCMCPVCLRF…MFHCIGCAHK (65 aa). The tract at residues 592–614 is disordered; sequence VAAETSYRKDEASVTPSTSKDQK. The stretch at 644 to 733 forms a coiled coil; it reads MFQKKADEAR…RMEVTRQQLV (90 aa).

In terms of assembly, self-interacts. Interacts with OBE1 and OBE2. Interacts with OBE4.

The protein localises to the nucleus. Its function is as follows. Probable transcription factor that functions redundantly with OBE4 in specification of the hypophysis and establishment of the embryonic root. Involved in the activation of ARF5/MP-dependent gene expression during embryonic root meristem initiation. Involved in shoot meristem homeostasis. The protein is Protein OBERON 3 of Arabidopsis thaliana (Mouse-ear cress).